The primary structure comprises 199 residues: Pyridoxal 5'-phosphate synthase subunit PdxT (199 aa).

Residue 49 to 51 (GES) participates in L-glutamine binding. Catalysis depends on C81, which acts as the Nucleophile. Residues R110 and 139 to 140 (IR) contribute to the L-glutamine site. Active-site charge relay system residues include H175 and E177.

The protein belongs to the glutaminase PdxT/SNO family. In the presence of PdxS, forms a dodecamer of heterodimers. Only shows activity in the heterodimer.

The enzyme catalyses aldehydo-D-ribose 5-phosphate + D-glyceraldehyde 3-phosphate + L-glutamine = pyridoxal 5'-phosphate + L-glutamate + phosphate + 3 H2O + H(+). The catalysed reaction is L-glutamine + H2O = L-glutamate + NH4(+). Its pathway is cofactor biosynthesis; pyridoxal 5'-phosphate biosynthesis. Functionally, catalyzes the hydrolysis of glutamine to glutamate and ammonia as part of the biosynthesis of pyridoxal 5'-phosphate. The resulting ammonia molecule is channeled to the active site of PdxS. In Frankia casuarinae (strain DSM 45818 / CECT 9043 / HFP020203 / CcI3), this protein is Pyridoxal 5'-phosphate synthase subunit PdxT.